The primary structure comprises 385 residues: Transmembrane protein 271 (385 aa).

2 helical membrane passes run C9–L29 and G50–L70. The disordered stretch occupies residues E83 to A111. Residues L121–I141 form a helical membrane-spanning segment. The interval P160–A203 is disordered. Positions P163 to R197 are enriched in low complexity. A helical transmembrane segment spans residues V219–V239. The segment at S245 to E305 is disordered. Over residues Q246–G258 the composition is skewed to basic residues. The segment covering R259–S277 has biased composition (low complexity). Residues R278–Q292 are compositionally biased toward basic residues.

Its subcellular location is the membrane. This is Transmembrane protein 271 from Homo sapiens (Human).